The chain runs to 1319 residues: Uromodulin-like 1 (1319 aa).

An N-terminal signal peptide occupies residues 1-22 (MMSRTVRLVLLALACTVDLSQA). The Extracellular segment spans residues 23-1273 (SGFTENGLSL…CTKPVLGTGY (1251 aa)). Positions 34–107 (SYQLCSYPVT…FEQLGLYCVL (74 aa)) constitute an EMI domain. 3 disulfides stabilise this stretch: Cys38/Cys95, Cys62/Cys71, and Cys94/Cys105. N-linked (GlcNAc...) asparagine glycosylation is present at Asn90. An N-linked (GlcNAc...) asparagine glycan is attached at Asn110. The 45-residue stretch at 115–159 (FASRPGVCPTAEAEPLSPSCSLDTDCSGLQKCCSWPGGRHCVSPT) folds into the WAP domain. N-linked (GlcNAc...) asparagine glycans are attached at residues Asn172, Asn193, and Asn243. Residues 265-306 (DVNECLHSELQACSVREQCRNLEGSYQCVSSQRLNHTDEDCP) form the EGF-like 1; calcium-binding domain. Disulfide bonds link Cys269–Cys283 and Cys277–Cys292. The region spanning 307–391 (PIRDFVALNV…ATLVVKTDAQ (85 aa)) is the Fibronectin type-III 1 domain. Asn315 carries an N-linked (GlcNAc...) asparagine glycan. The SEA 1 domain occupies 389–503 (DAQVFQVTIR…QRTFVQDWDE (115 aa)). The region spanning 500 to 545 (DWDECAHSSEHDCHPSARCINLEGSYTCQCLTARDASPSRAGRVCE) is the EGF-like 2; calcium-binding domain. Intrachain disulfides connect Cys504–Cys518, Cys512–Cys527, and Cys529–Cys544. 2 disordered regions span residues 569 to 649 (TGIT…ITKD) and 664 to 703 (HSSP…PESP). Over residues 619-632 (TGQGQTHGTHQGTT) the composition is skewed to low complexity. Basic and acidic residues predominate over residues 638-647 (TTRESQELIT). The span at 664 to 678 (HSSPTWKTPPNSTRL) shows a compositional bias: polar residues. A Fibronectin type-III 2 domain is found at 709–795 (PIGKVTVSNV…QLKVRTVAQK (87 aa)). 2 N-linked (GlcNAc...) asparagine glycosylation sites follow: Asn717 and Asn757. The SEA 2 domain occupies 792 to 904 (VAQKLAGNVR…GKTFMQDYNE (113 aa)). The EGF-like 3; calcium-binding domain occupies 901–945 (DYNECDMKEDDCAPGTCRNTFGSFTCSCDEGGPDSQVEYSGRSCD). 3 cysteine pairs are disulfide-bonded: Cys905/Cys917, Cys912/Cys926, and Cys928/Cys944. Positions 939-966 (YSGRSCDGDPSGNMTQTPGSEWSPTPAG) are disordered. Over residues 950-961 (GNMTQTPGSEWS) the composition is skewed to polar residues. The N-linked (GlcNAc...) asparagine glycan is linked to Asn951. The region spanning 995-1238 (SCEIETVIIT…NSCRISCNDF (244 aa)) is the ZP domain. An intrachain disulfide couples Cys1160 to Cys1218. The chain crosses the membrane as a helical span at residues 1274–1294 (IILLAAAALLVVAGATTLLIL). Residues 1295 to 1319 (RYQRVRQKYNLRIQTDDFSYQVFSQ) are Cytoplasmic-facing.

It is found in the cell membrane. In Mus musculus (Mouse), this protein is Uromodulin-like 1 (Umodl1).